The following is a 529-amino-acid chain: Protein PNS1 (529 aa).

The segment at 1 to 58 (MSQQYSYGGGGGAGYPPPQMQPPNSYAQANYQGQPQGAQNQYYNGQQPHHNAPQQYYG) is disordered. At 1–84 (MSQQYSYGGG…LQPKPKFRDP (84 aa)) the chain is on the cytoplasmic side. Residues 22–48 (PPNSYAQANYQGQPQGAQNQYYNGQQP) are compositionally biased toward low complexity. A helical transmembrane segment spans residues 85-105 (IFLVLFLLVFAGFIALSVICL). Topologically, residues 106–132 (RSYSNADVNVSIGRANVAGSTLNGHTA) are extracellular. N-linked (GlcNAc...) asparagine glycosylation is present at asparagine 114. A helical membrane pass occupies residues 133 to 153 (IMFMICCAVALVLSFVYILLV). Over 154-158 (RTFPK) the chain is Cytoplasmic. A helical transmembrane segment spans residues 159-179 (IILEATLLLTTLSNVAFCVYL). Topologically, residues 180 to 184 (WVRGN) are extracellular. A helical membrane pass occupies residues 185-205 (TAAAIIFTIFAVLSVIAYFFM). The Cytoplasmic portion of the chain corresponds to 206–230 (RKRIPLAKLILVTVIRTAEQYKSVY). The chain crosses the membrane as a helical span at residues 231 to 251 (VVALGGLIVETAFSAWTSWVV). Over 252–271 (VAAYQRFEPSGQAAGSSSSN) the chain is Extracellular. A glycan (N-linked (GlcNAc...) asparagine) is linked at asparagine 271. Residues 272-292 (ASIIGIMVFIVFAYYWISEVI) form a helical membrane-spanning segment. At 293–294 (KN) the chain is on the cytoplasmic side. Residues 295–315 (IAFTTVAGIFGVAYYNANKVA) form a helical membrane-spanning segment. The Extracellular portion of the chain corresponds to 316–325 (NAAWGAFRRS). A helical transmembrane segment spans residues 326–346 (MTYSLGSICFGSLIVAILDLL). The Cytoplasmic segment spans residues 347–362 (RALFNILQSQAASDGD). A helical transmembrane segment spans residues 363–383 (MTGQILACVAGCCVSCIQGLV). The Extracellular portion of the chain corresponds to 384–427 (DYFNRYAYINIALYGNGYITAAKETWALLKDRGIDAIINDSLVN). A glycan (N-linked (GlcNAc...) asparagine) is linked at asparagine 422. The helical transmembrane segment at 428–448 (IVFNCGAFIIGLLTALFAFIY) threads the bilayer. Topologically, residues 449–464 (EQLTNPRYLQNDAGYY) are cytoplasmic. A helical membrane pass occupies residues 465 to 485 (SIVLLVAFGLGFNIALSVGAG). The Extracellular segment spans residues 486–529 (SIASGVSTYFVALAEDPYILQGKNPELFEMIRQQYPQVVQGVNH).

It belongs to the CTL (choline transporter-like) family.

It localises to the cell membrane. Probably involved in transport through the plasma membrane. This chain is Protein PNS1 (PNS1), found in Mycosarcoma maydis (Corn smut fungus).